Here is a 274-residue protein sequence, read N- to C-terminus: Large ribosomal subunit protein uL2c (274 aa).

The tract at residues 230–252 is disordered; it reads HPHGGGEGRSPIGRSKPLTPWGK.

It belongs to the universal ribosomal protein uL2 family. As to quaternary structure, part of the 50S ribosomal subunit.

Its subcellular location is the plastid. This is Large ribosomal subunit protein uL2c (rpl2) from Euglena longa (Euglenophycean alga).